We begin with the raw amino-acid sequence, 224 residues long: Uracil-DNA glycosylase (224 aa).

Aspartate 65 (proton acceptor) is an active-site residue.

Belongs to the uracil-DNA glycosylase (UDG) superfamily. UNG family.

It localises to the cytoplasm. The enzyme catalyses Hydrolyzes single-stranded DNA or mismatched double-stranded DNA and polynucleotides, releasing free uracil.. Its function is as follows. Excises uracil residues from the DNA which can arise as a result of misincorporation of dUMP residues by DNA polymerase or due to deamination of cytosine. The polypeptide is Uracil-DNA glycosylase (Buchnera aphidicola subsp. Baizongia pistaciae (strain Bp)).